The sequence spans 208 residues: V-type ATP synthase subunit D (208 aa).

It belongs to the V-ATPase D subunit family.

In terms of biological role, produces ATP from ADP in the presence of a proton gradient across the membrane. This Streptococcus pyogenes serotype M6 (strain ATCC BAA-946 / MGAS10394) protein is V-type ATP synthase subunit D.